A 180-amino-acid chain; its full sequence is Immediate early response gene 2 protein (180 aa).

The interval 53 to 135 (MSEKSGQSVT…KRRSKTATDS (83 aa)) is disordered. Residues 56 to 92 (KSGQSVTEECTSHTQEPMDTSSSTATPLRETSGQSSE) show a composition bias toward polar residues. Basic and acidic residues predominate over residues 93–103 (DGQRSGLEGHP).

The protein belongs to the IER family. Interacts with FIBPB.

The protein localises to the nucleus. It localises to the cytoplasm. Functionally, DNA-binding protein that seems to act as a transcription factor. Mediates with FIBPB FGF-signaling in Kupffer's vesicle ciliogenesis and in the establishment of laterality in the embryo. This is Immediate early response gene 2 protein from Danio rerio (Zebrafish).